The sequence spans 241 residues: Uridylate kinase (241 aa).

12–15 (KVSG) contacts ATP. The involved in allosteric activation by GTP stretch occupies residues 20–25 (GEKGTG). Residue Gly54 participates in UMP binding. The ATP site is built by Gly55 and Arg59. Residues Asp74 and 135–142 (TGNPYFST) each bind UMP. ATP contacts are provided by Asn163, Tyr169, and Asp172.

This sequence belongs to the UMP kinase family. As to quaternary structure, homohexamer.

The protein localises to the cytoplasm. The enzyme catalyses UMP + ATP = UDP + ADP. It participates in pyrimidine metabolism; CTP biosynthesis via de novo pathway; UDP from UMP (UMPK route): step 1/1. Allosterically activated by GTP. Inhibited by UTP. Its function is as follows. Catalyzes the reversible phosphorylation of UMP to UDP. In Lactobacillus johnsonii (strain CNCM I-12250 / La1 / NCC 533), this protein is Uridylate kinase.